The following is a 229-amino-acid chain: UPF0173 metal-dependent hydrolase SAOUHSC_01815 (229 aa).

Belongs to the UPF0173 family.

This Staphylococcus aureus (strain NCTC 8325 / PS 47) protein is UPF0173 metal-dependent hydrolase SAOUHSC_01815.